A 170-amino-acid polypeptide reads, in one-letter code: Photosystem I assembly protein Ycf3 (170 aa).

TPR repeat units lie at residues 35–68 (AFCY…EEDP), 72–105 (SYII…NPRL), and 120–153 (GLKA…APNN).

It belongs to the Ycf3 family.

Its subcellular location is the plastid. The protein localises to the chloroplast thylakoid membrane. Functionally, essential for the assembly of the photosystem I (PSI) complex. May act as a chaperone-like factor to guide the assembly of the PSI subunits. In Gracilaria tenuistipitata var. liui (Red alga), this protein is Photosystem I assembly protein Ycf3.